Here is a 188-residue protein sequence, read N- to C-terminus: GMP synthase [glutamine-hydrolyzing] subunit A (188 aa).

One can recognise a Glutamine amidotransferase type-1 domain in the interval 3 to 188 (PLYVVNNYGQ…FSICTGQNKG (186 aa)). Catalysis depends on C75, which acts as the Nucleophile. Residues H162 and E164 contribute to the active site.

As to quaternary structure, heterodimer composed of a glutamine amidotransferase subunit (A) and a GMP-binding subunit (B).

The catalysed reaction is XMP + L-glutamine + ATP + H2O = GMP + L-glutamate + AMP + diphosphate + 2 H(+). It functions in the pathway purine metabolism; GMP biosynthesis; GMP from XMP (L-Gln route): step 1/1. Its function is as follows. Catalyzes the synthesis of GMP from XMP. The protein is GMP synthase [glutamine-hydrolyzing] subunit A of Methanospirillum hungatei JF-1 (strain ATCC 27890 / DSM 864 / NBRC 100397 / JF-1).